Consider the following 467-residue polypeptide: ATP-dependent protease ATPase subunit HslU (467 aa).

Residues I20, 62-67, D280, E345, and R417 each bind ATP; that span reads GVGKTE.

Belongs to the ClpX chaperone family. HslU subfamily. A double ring-shaped homohexamer of HslV is capped on each side by a ring-shaped HslU homohexamer. The assembly of the HslU/HslV complex is dependent on binding of ATP.

It localises to the cytoplasm. Its function is as follows. ATPase subunit of a proteasome-like degradation complex; this subunit has chaperone activity. The binding of ATP and its subsequent hydrolysis by HslU are essential for unfolding of protein substrates subsequently hydrolyzed by HslV. HslU recognizes the N-terminal part of its protein substrates and unfolds these before they are guided to HslV for hydrolysis. This is ATP-dependent protease ATPase subunit HslU from Ligilactobacillus salivarius (strain UCC118) (Lactobacillus salivarius).